The chain runs to 719 residues: Eukaryotic translation initiation factor 3 subunit B (719 aa).

Residues 60 to 147 (NILVVDNLPV…HIFAVNMFDD (88 aa)) form the RRM domain. WD repeat units follow at residues 167–207 (VPGE…KPEL), 511–553 (LKGK…TMAS), and 555–598 (EHFM…LYRI). Residues 675–686 (EKMERQKLRDGE) are compositionally biased toward basic and acidic residues. The segment at 675–698 (EKMERQKLRDGEASDEEEEYEAKE) is disordered. Positions 687–698 (ASDEEEEYEAKE) are enriched in acidic residues.

It belongs to the eIF-3 subunit B family. As to quaternary structure, component of the eukaryotic translation initiation factor 3 (eIF-3) complex.

Its subcellular location is the cytoplasm. RNA-binding component of the eukaryotic translation initiation factor 3 (eIF-3) complex, which is involved in protein synthesis of a specialized repertoire of mRNAs and, together with other initiation factors, stimulates binding of mRNA and methionyl-tRNAi to the 40S ribosome. The eIF-3 complex specifically targets and initiates translation of a subset of mRNAs involved in cell proliferation. The polypeptide is Eukaryotic translation initiation factor 3 subunit B (TIF3B1) (Nicotiana tabacum (Common tobacco)).